The following is a 300-amino-acid chain: 4-hydroxy-tetrahydrodipicolinate synthase (300 aa).

Pyruvate is bound at residue Thr-53. Tyr-141 (proton donor/acceptor) is an active-site residue. The Schiff-base intermediate with substrate role is filled by Lys-169. Thr-211 is a binding site for pyruvate.

It belongs to the DapA family. Homotetramer; dimer of dimers.

The protein resides in the cytoplasm. The catalysed reaction is L-aspartate 4-semialdehyde + pyruvate = (2S,4S)-4-hydroxy-2,3,4,5-tetrahydrodipicolinate + H2O + H(+). Its pathway is amino-acid biosynthesis; L-lysine biosynthesis via DAP pathway; (S)-tetrahydrodipicolinate from L-aspartate: step 3/4. Its function is as follows. Catalyzes the condensation of (S)-aspartate-beta-semialdehyde [(S)-ASA] and pyruvate to 4-hydroxy-tetrahydrodipicolinate (HTPA). The sequence is that of 4-hydroxy-tetrahydrodipicolinate synthase from Rickettsia massiliae (strain Mtu5).